The chain runs to 77 residues: Apelin (77 aa).

A signal peptide spans 1-22 (MNLRRCVQALLLLWLCLSAVCG). Positions 23–41 (GPLLQTSDGKEMEEGTIRY) are excised as a propeptide. The disordered stretch occupies residues 43 to 77 (VQPRGPRSGPGPWQGGRRKFRRQRPRLSHKGPMPF). Over residues 58-71 (GRRKFRRQRPRLSH) the composition is skewed to basic residues. Glutamine 65 carries the post-translational modification Pyrrolidone carboxylic acid.

This sequence belongs to the apelin family. In terms of processing, at least 5 active peptides may be produced by proteolytic processing of the peptide precursor.

It is found in the secreted. The protein resides in the extracellular space. Peptide hormone that functions as endogenous ligand for the G-protein-coupled apelin receptor (APLNR/APJ), that plays a role in cadiovascular homeostasis. Functions as a balanced agonist activating both G(i) protein pathway and beta-arrestin pathway of APLNR. Downstream G proteins activation, apelin can inhibit cAMP production and activate key intracellular effectors such as ERKs. On the other hand, APLNR activation induces beta-arrestin recruitment to the membrane leading to desensitization and internalization of the receptor. Apelin blunts cardiac hypertrophic induction from APLNR on response to pathological stimuli, but also induces myocardial hypertrophy under normal conditions. Apelin-36 dissociates more hardly than (pyroglu)apelin-13 from APLNR. Involved in the regulation of cardiac precursor cell movements during gastrulation and heart morphogenesis. Has an inhibitory effect on cytokine production in response to T-cell receptor/CD3 cross-linking; the oral intake of apelin in the colostrum and the milk might therefore modulate immune responses in neonates. Plays a role in early coronary blood vessels formation. Mediates myocardial contractility in an ERK1/2-dependent manner. May also have a role in the central control of body fluid homeostasis by influencing vasopressin release and drinking behavior. This chain is Apelin (APLN), found in Bos taurus (Bovine).